The chain runs to 734 residues: Photosystem I P700 chlorophyll a apoprotein A2 (734 aa).

A run of 8 helical transmembrane segments spans residues 46–69, 135–158, 175–199, 273–291, 330–353, 369–395, 417–439, and 517–535; these read IFASHFGQLAIIFLWTSGNLFHVA, LYTGALFLLFLSAISLIAGWLHLQ, LNHHLSGLFGVSSLAWTGHLVHVAI, IAHHHLAIAFVFLVAGHMY, IHFQLGLALASLGVITSLVAQHMY, AALYTHHQYIAGFIMTGAFAHGAIFFI, AIKSHLSWASLFLGFHTLGLYVH, and FLVHHAIALGLHTTTLILV. The [4Fe-4S] cluster site is built by C559 and C568. Helical transmembrane passes span 575 to 596 and 643 to 665; these read AFYLAVFWMLNTIGWVTFYWHW and LSVWAWMFLFGHLVWATGFMFLI. Positions 654, 662, and 670 each coordinate chlorophyll a. W671 contributes to the phylloquinone binding site. The chain crosses the membrane as a helical span at residues 707–727; sequence LVGLAHFSVGYIFTYAAFLIA.

This sequence belongs to the PsaA/PsaB family. As to quaternary structure, the PsaA/B heterodimer binds the P700 chlorophyll special pair and subsequent electron acceptors. PSI consists of a core antenna complex that captures photons, and an electron transfer chain that converts photonic excitation into a charge separation. The eukaryotic PSI reaction center is composed of at least 11 subunits. P700 is a chlorophyll a/chlorophyll a' dimer, A0 is one or more chlorophyll a, A1 is one or both phylloquinones and FX is a shared 4Fe-4S iron-sulfur center. serves as cofactor.

The protein localises to the plastid. It localises to the chloroplast thylakoid membrane. The enzyme catalyses reduced [plastocyanin] + hnu + oxidized [2Fe-2S]-[ferredoxin] = oxidized [plastocyanin] + reduced [2Fe-2S]-[ferredoxin]. Functionally, psaA and PsaB bind P700, the primary electron donor of photosystem I (PSI), as well as the electron acceptors A0, A1 and FX. PSI is a plastocyanin-ferredoxin oxidoreductase, converting photonic excitation into a charge separation, which transfers an electron from the donor P700 chlorophyll pair to the spectroscopically characterized acceptors A0, A1, FX, FA and FB in turn. Oxidized P700 is reduced on the lumenal side of the thylakoid membrane by plastocyanin. In Amborella trichopoda, this protein is Photosystem I P700 chlorophyll a apoprotein A2.